Consider the following 323-residue polypeptide: UDP-N-acetylenolpyruvoylglucosamine reductase (323 aa).

One can recognise an FAD-binding PCMH-type domain in the interval 52-217; sequence KSGGAADWLF…VSARLQGEPG (166 aa). Arginine 197 is an active-site residue. Residues 234–253 are disordered; the sequence is EQSQPVRTKTGGSTFKNPPG. Over residues 235–249 the composition is skewed to polar residues; the sequence is QSQPVRTKTGGSTFK. Serine 246 acts as the Proton donor in catalysis. Glutamate 316 is an active-site residue.

The protein belongs to the MurB family. FAD serves as cofactor.

The protein localises to the cytoplasm. It carries out the reaction UDP-N-acetyl-alpha-D-muramate + NADP(+) = UDP-N-acetyl-3-O-(1-carboxyvinyl)-alpha-D-glucosamine + NADPH + H(+). It functions in the pathway cell wall biogenesis; peptidoglycan biosynthesis. Cell wall formation. This Erythrobacter litoralis (strain HTCC2594) protein is UDP-N-acetylenolpyruvoylglucosamine reductase.